A 252-amino-acid polypeptide reads, in one-letter code: 2-succinyl-6-hydroxy-2,4-cyclohexadiene-1-carboxylate synthase (252 aa).

It belongs to the AB hydrolase superfamily. MenH family. In terms of assembly, monomer.

It carries out the reaction 5-enolpyruvoyl-6-hydroxy-2-succinyl-cyclohex-3-ene-1-carboxylate = (1R,6R)-6-hydroxy-2-succinyl-cyclohexa-2,4-diene-1-carboxylate + pyruvate. It functions in the pathway quinol/quinone metabolism; 1,4-dihydroxy-2-naphthoate biosynthesis; 1,4-dihydroxy-2-naphthoate from chorismate: step 3/7. It participates in quinol/quinone metabolism; menaquinone biosynthesis. Its function is as follows. Catalyzes a proton abstraction reaction that results in 2,5-elimination of pyruvate from 2-succinyl-5-enolpyruvyl-6-hydroxy-3-cyclohexene-1-carboxylate (SEPHCHC) and the formation of 2-succinyl-6-hydroxy-2,4-cyclohexadiene-1-carboxylate (SHCHC). The polypeptide is 2-succinyl-6-hydroxy-2,4-cyclohexadiene-1-carboxylate synthase (Escherichia coli O8 (strain IAI1)).